A 584-amino-acid chain; its full sequence is Long-chain-fatty-acid--AMP ligase FadD23 (584 aa).

Helical transmembrane passes span 199–219 and 225–245; these read YFAD…WLPF and LVLG…TSPV.

The protein belongs to the ATP-dependent AMP-binding enzyme family.

It is found in the membrane. The catalysed reaction is holo-[(hydroxy)phthioceranic acid synthase] + hexadecanoate + ATP = hexadecanoyl-[(hydroxy)phthioceranic acid synthase] + AMP + diphosphate. The enzyme catalyses holo-[(hydroxy)phthioceranic acid synthase] + octadecanoate + ATP = octadecanoyl-[(hydroxy)phthioceranic acid synthase] + AMP + diphosphate. It functions in the pathway lipid metabolism; fatty acid biosynthesis. Catalyzes the activation of long-chain fatty acids as acyl-adenylates (acyl-AMP), which are then transferred to the multifunctional polyketide synthase (PKS) type III for further chain extension. Involved in the biosynthesis of sulfolipid 1 (SL-1). This chain is Long-chain-fatty-acid--AMP ligase FadD23 (fadD23), found in Mycobacterium bovis (strain ATCC BAA-935 / AF2122/97).